The chain runs to 211 residues: 3-demethoxyubiquinol 3-hydroxylase (211 aa).

Residues glutamate 60, glutamate 90, histidine 93, glutamate 142, glutamate 174, and histidine 177 each coordinate Fe cation.

Belongs to the COQ7 family. Fe cation serves as cofactor.

The protein resides in the cell membrane. It carries out the reaction a 5-methoxy-2-methyl-3-(all-trans-polyprenyl)benzene-1,4-diol + AH2 + O2 = a 3-demethylubiquinol + A + H2O. Its pathway is cofactor biosynthesis; ubiquinone biosynthesis. Its function is as follows. Catalyzes the hydroxylation of 2-nonaprenyl-3-methyl-6-methoxy-1,4-benzoquinol during ubiquinone biosynthesis. This chain is 3-demethoxyubiquinol 3-hydroxylase, found in Francisella tularensis subsp. novicida (strain U112).